A 407-amino-acid chain; its full sequence is Rubber oxygenase (407 aa).

A signal peptide (tat-type signal) is located at residues 1-30 (MDGFSRRRMLMTGGALGAVGALGAATRALA). His-198 provides a ligand contact to heme.

This sequence belongs to the rubber oxygenase Lcp family. Heme b is required as a cofactor. Exported by the Tat system. The position of the signal peptide cleavage has not been experimentally proven.

The protein localises to the secreted. It functions in the pathway biopolymer metabolism. Functionally, involved in the initial step of rubber degradation. Catalyzes the oxidative C-C cleavage of poly(cis-1,4-isoprene) in synthetic as well as in natural rubber by the addition of oxygen (O2) to the double bonds, leading to a mixture of oligonucleotide-isoprenoids with terminal keto and aldehyde groups (endo-type cleavage). The cleavage products are of different lengths, ranging from C20 (four isoprene units) to higher oligo-isoprenoids. Is not able to cleave low-molecular-weight substrate analogs with isoprenoid structure such as squalene (1,4-trans-isoprenoid), carotenoids, or alpha-tocopherol. The sequence is that of Rubber oxygenase from Streptomyces sp. (strain K30).